The primary structure comprises 80 residues: Small ribosomal subunit protein uS17 (80 aa).

It belongs to the universal ribosomal protein uS17 family. As to quaternary structure, part of the 30S ribosomal subunit.

Functionally, one of the primary rRNA binding proteins, it binds specifically to the 5'-end of 16S ribosomal RNA. The polypeptide is Small ribosomal subunit protein uS17 (Chelativorans sp. (strain BNC1)).